The primary structure comprises 434 residues: L-2-hydroxyglutarate dehydrogenase, mitochondrial (434 aa).

The protein belongs to the L2HGDH family. Requires FAD as cofactor.

The protein resides in the mitochondrion. It catalyses the reaction (S)-2-hydroxyglutarate + A = 2-oxoglutarate + AH2. This is L-2-hydroxyglutarate dehydrogenase, mitochondrial from Caenorhabditis briggsae.